Here is a 141-residue protein sequence, read N- to C-terminus: Large ribosomal subunit protein uL11 (141 aa).

This sequence belongs to the universal ribosomal protein uL11 family. In terms of assembly, part of the ribosomal stalk of the 50S ribosomal subunit. Interacts with L10 and the large rRNA to form the base of the stalk. L10 forms an elongated spine to which L12 dimers bind in a sequential fashion forming a multimeric L10(L12)X complex. Post-translationally, one or more lysine residues are methylated.

Its function is as follows. Forms part of the ribosomal stalk which helps the ribosome interact with GTP-bound translation factors. This is Large ribosomal subunit protein uL11 from Lactobacillus delbrueckii subsp. bulgaricus (strain ATCC 11842 / DSM 20081 / BCRC 10696 / JCM 1002 / NBRC 13953 / NCIMB 11778 / NCTC 12712 / WDCM 00102 / Lb 14).